Consider the following 196-residue polypeptide: SERTA domain-containing protein 3 (196 aa).

Positions 1–21 (MVGGLKRKHSDLEEEEERWEW) are disordered. One can recognise an SERTA domain in the interval 26–73 (LQSYQQALLRISLDKVQRSLGPRAPSLRRHVLIHNTLQQLQAALRLAP). Residues 104-125 (TSMDGTEPPQNPVTPLGLQNEV) are disordered.

In terms of assembly, interacts with RPA2. As to quaternary structure, (Microbial infection) Interacts with influenza virus PA, PB1 and PB2,leading to inhibition of RdRp complex assembly. (Microbial infection) Interacts with zika virus capsid protein.

Its subcellular location is the nucleus. In terms of biological role, antiviral interferon-stimulated protein that plays a role in innate immunity and in the suppression of viruses through different mechanisms. Plays a role in the late phase response of TLR-induced immune effector expression. During influenza infection, interacts with PB2, PB1, and PA to disrupt the formation of the viral RdRp complex. Inhibits zika virus by interacting with the capsid protein in the nucleolus and reducing its abundance through proteasomal degradation. Strong transcriptional coactivator. The sequence is that of SERTA domain-containing protein 3 (SERTAD3) from Homo sapiens (Human).